A 158-amino-acid chain; its full sequence is NADH-quinone oxidoreductase subunit B (158 aa).

[4Fe-4S] cluster-binding residues include Cys-37, Cys-38, Cys-102, and Cys-132.

This sequence belongs to the complex I 20 kDa subunit family. As to quaternary structure, NDH-1 is composed of 14 different subunits. Subunits NuoB, C, D, E, F, and G constitute the peripheral sector of the complex. [4Fe-4S] cluster is required as a cofactor.

It is found in the cell inner membrane. It catalyses the reaction a quinone + NADH + 5 H(+)(in) = a quinol + NAD(+) + 4 H(+)(out). Functionally, NDH-1 shuttles electrons from NADH, via FMN and iron-sulfur (Fe-S) centers, to quinones in the respiratory chain. The immediate electron acceptor for the enzyme in this species is believed to be ubiquinone. Couples the redox reaction to proton translocation (for every two electrons transferred, four hydrogen ions are translocated across the cytoplasmic membrane), and thus conserves the redox energy in a proton gradient. The polypeptide is NADH-quinone oxidoreductase subunit B (Thiobacillus denitrificans (strain ATCC 25259 / T1)).